We begin with the raw amino-acid sequence, 162 residues long: NADPH-dependent 7-cyano-7-deazaguanine reductase (162 aa).

C53 serves as the catalytic Thioimide intermediate. Residue D60 is the Proton donor of the active site. Substrate is bound by residues 75 to 77 (VES) and 94 to 95 (HE).

Belongs to the GTP cyclohydrolase I family. QueF type 1 subfamily.

Its subcellular location is the cytoplasm. It carries out the reaction 7-aminomethyl-7-carbaguanine + 2 NADP(+) = 7-cyano-7-deazaguanine + 2 NADPH + 3 H(+). The protein operates within tRNA modification; tRNA-queuosine biosynthesis. Catalyzes the NADPH-dependent reduction of 7-cyano-7-deazaguanine (preQ0) to 7-aminomethyl-7-deazaguanine (preQ1). The chain is NADPH-dependent 7-cyano-7-deazaguanine reductase from Streptococcus mutans serotype c (strain ATCC 700610 / UA159).